We begin with the raw amino-acid sequence, 383 residues long: Cysteine protease StiP (383 aa).

Belongs to the cysteine protease StiP family. Post-translationally, is probably processed via an autocatalytic removal of a proregion of about 100 amino acids.

Its activity is regulated as follows. Is inhibited by bromopyruvate in vitro. Activity is not affected by the presence of tellurite. Functionally, cysteine protease that may play a role in regulating cell morphology in response to stressful conditions which likely cause oxidative damage. Appears to catalyze its own cleavage, which probably leads to its activation. The chain is Cysteine protease StiP (stiP) from Acinetobacter baylyi (strain ATCC 33305 / BD413 / ADP1).